The primary structure comprises 668 residues: Patellin-5 (668 aa).

The segment at 1–263 is disordered; the sequence is MSQDSATTTP…STTTSTVASR (263 aa). Basic and acidic residues-rich tracts occupy residues 55–68, 82–100, 107–125, and 132–150; these read ESNHTAEVVSEKVT, AAEDSEQTHEVTPETETAK, TAEDSEQTHEVTPEKETVK, and VAEDSEQTHEVTPETETVK. Polar residues predominate over residues 170–186; that stretch reads TPETETSEADTSLLVTS. Positions 218 to 231 are enriched in acidic residues; it reads VEDWTEPELPDEAV. Residues 244-254 are compositionally biased toward pro residues; the sequence is PEPQTPPPPPS. S290 carries the phosphoserine modification. Residues 377–552 enclose the CRAL-TRIO domain; the sequence is DENLGDDLDK…QYGGLSVDNC (176 aa). One can recognise a GOLD domain in the interval 556 to 662; the sequence is SDFTHDDIAT…KKMLIYRFKV (107 aa).

Belongs to the patellin family.

Its subcellular location is the membrane. The protein localises to the cytoplasm. Its function is as follows. Carrier protein that may be involved in membrane-trafficking events associated with cell plate formation during cytokinesis. Binds to some hydrophobic molecules such as phosphoinositides and promotes their transfer between the different cellular sites. The polypeptide is Patellin-5 (PATL5) (Arabidopsis thaliana (Mouse-ear cress)).